We begin with the raw amino-acid sequence, 474 residues long: Aspartyl/glutamyl-tRNA(Asn/Gln) amidotransferase subunit B (474 aa).

Belongs to the GatB/GatE family. GatB subfamily. Heterotrimer of A, B and C subunits.

It carries out the reaction L-glutamyl-tRNA(Gln) + L-glutamine + ATP + H2O = L-glutaminyl-tRNA(Gln) + L-glutamate + ADP + phosphate + H(+). The catalysed reaction is L-aspartyl-tRNA(Asn) + L-glutamine + ATP + H2O = L-asparaginyl-tRNA(Asn) + L-glutamate + ADP + phosphate + 2 H(+). Its function is as follows. Allows the formation of correctly charged Asn-tRNA(Asn) or Gln-tRNA(Gln) through the transamidation of misacylated Asp-tRNA(Asn) or Glu-tRNA(Gln) in organisms which lack either or both of asparaginyl-tRNA or glutaminyl-tRNA synthetases. The reaction takes place in the presence of glutamine and ATP through an activated phospho-Asp-tRNA(Asn) or phospho-Glu-tRNA(Gln). The protein is Aspartyl/glutamyl-tRNA(Asn/Gln) amidotransferase subunit B of Wolbachia pipientis wMel.